The primary structure comprises 204 residues: Cytochrome c oxidase subunit 3 (204 aa).

5 helical membrane-spanning segments follow: residues 12–32, 56–76, 101–121, 133–153, and 171–191; these read YGNL…IQWW, GMML…WAYF, FQIP…VTWA, AIHS…LQMM, and FFVA…FLFM.

This sequence belongs to the cytochrome c oxidase subunit 3 family. As to quaternary structure, component of the cytochrome c oxidase (complex IV, CIV), a multisubunit enzyme composed of a catalytic core of 3 subunits and several supernumerary subunits. The complex exists as a monomer or a dimer and forms supercomplexes (SCs) in the inner mitochondrial membrane with ubiquinol-cytochrome c oxidoreductase (cytochrome b-c1 complex, complex III, CIII).

The protein resides in the mitochondrion inner membrane. The enzyme catalyses 4 Fe(II)-[cytochrome c] + O2 + 8 H(+)(in) = 4 Fe(III)-[cytochrome c] + 2 H2O + 4 H(+)(out). In terms of biological role, component of the cytochrome c oxidase, the last enzyme in the mitochondrial electron transport chain which drives oxidative phosphorylation. The respiratory chain contains 3 multisubunit complexes succinate dehydrogenase (complex II, CII), ubiquinol-cytochrome c oxidoreductase (cytochrome b-c1 complex, complex III, CIII) and cytochrome c oxidase (complex IV, CIV), that cooperate to transfer electrons derived from NADH and succinate to molecular oxygen, creating an electrochemical gradient over the inner membrane that drives transmembrane transport and the ATP synthase. Cytochrome c oxidase is the component of the respiratory chain that catalyzes the reduction of oxygen to water. Electrons originating from reduced cytochrome c in the intermembrane space (IMS) are transferred via the dinuclear copper A center (CU(A)) of subunit 2 and heme A of subunit 1 to the active site in subunit 1, a binuclear center (BNC) formed by heme A3 and copper B (CU(B)). The BNC reduces molecular oxygen to 2 water molecules using 4 electrons from cytochrome c in the IMS and 4 protons from the mitochondrial matrix. This chain is Cytochrome c oxidase subunit 3 (COIII), found in Enteroctopus dofleini (North Pacific giant octopus).